A 377-amino-acid chain; its full sequence is Endoplasmic reticulum-Golgi intermediate compartment protein 2 (377 aa).

The Cytoplasmic portion of the chain corresponds to 1 to 33 (MRRLNRKKTLSLVKELDAFPKVPESYVETSASG). The helical transmembrane segment at 34–54 (GTVSLIAFTTMALLTIMEFSV) threads the bilayer. At 55–319 (YQDTWMKYEY…PFWQFFVRLC (265 aa)) the chain is on the lumenal side. The chain crosses the membrane as a helical span at residues 320–340 (GIVGGIFSTTGMLHGIGKFIV). The Cytoplasmic segment spans residues 341 to 377 (EIICCRFRLGSYKPVNSVPFEDGHTDNHLPLLENNTH).

It belongs to the ERGIC family. May form a heteromeric complex composed of ERGIC1, ERGIC2 and ERGIC3. Interacts with ERGIC3, the interaction is required for the stable expression of both proteins. May interact with EEF1A1. As to expression, ubiquitously expressed.

It localises to the endoplasmic reticulum-Golgi intermediate compartment membrane. The protein localises to the golgi apparatus. The protein resides in the cis-Golgi network membrane. It is found in the endoplasmic reticulum membrane. Its subcellular location is the cytoplasm. It localises to the nucleus. Its function is as follows. Possible role in transport between endoplasmic reticulum and Golgi. This is Endoplasmic reticulum-Golgi intermediate compartment protein 2 (ERGIC2) from Homo sapiens (Human).